The following is a 216-amino-acid chain: Holliday junction branch migration complex subunit RuvA (216 aa).

Residues 1–64 (MISFIKGVLI…EDAQQLYGFK (64 aa)) are domain I. The interval 65-143 (SKVDKKVFQE…KMANEIYAQT (79 aa)) is domain II. Residues 144 to 163 (SGTTTTSQDSQAQQAPTSAV) are flexible linker. The segment at 164 to 216 (LANSIFNESVDALLALGYKQKDAEKMSRSAMGDATTAAEVIRKALQGSIRSKR) is domain III.

This sequence belongs to the RuvA family. In terms of assembly, homotetramer. Forms an RuvA(8)-RuvB(12)-Holliday junction (HJ) complex. HJ DNA is sandwiched between 2 RuvA tetramers; dsDNA enters through RuvA and exits via RuvB. An RuvB hexamer assembles on each DNA strand where it exits the tetramer. Each RuvB hexamer is contacted by two RuvA subunits (via domain III) on 2 adjacent RuvB subunits; this complex drives branch migration. In the full resolvosome a probable DNA-RuvA(4)-RuvB(12)-RuvC(2) complex forms which resolves the HJ.

The protein resides in the cytoplasm. The RuvA-RuvB-RuvC complex processes Holliday junction (HJ) DNA during genetic recombination and DNA repair, while the RuvA-RuvB complex plays an important role in the rescue of blocked DNA replication forks via replication fork reversal (RFR). RuvA specifically binds to HJ cruciform DNA, conferring on it an open structure. The RuvB hexamer acts as an ATP-dependent pump, pulling dsDNA into and through the RuvAB complex. HJ branch migration allows RuvC to scan DNA until it finds its consensus sequence, where it cleaves and resolves the cruciform DNA. The protein is Holliday junction branch migration complex subunit RuvA of Francisella tularensis subsp. novicida (strain U112).